Reading from the N-terminus, the 100-residue chain is uncharacterized protein (100 aa).

The protein to M.jannaschii MJ1155.1.

This is an uncharacterized protein from Archaeoglobus fulgidus (strain ATCC 49558 / DSM 4304 / JCM 9628 / NBRC 100126 / VC-16).